Here is a 750-residue protein sequence, read N- to C-terminus: Photosystem I P700 chlorophyll a apoprotein A1 (750 aa).

The next 8 helical transmembrane spans lie at 70-93 (VFSA…FHGA), 156-179 (LYCT…FHYH), 195-219 (LNHH…HVSL), 291-309 (TVHH…GHMY), 346-369 (WHAQ…HHMY), 385-411 (LSLF…IFMV), 433-455 (AIIS…LYIH), and 531-549 (FLVH…LILL). 2 residues coordinate [4Fe-4S] cluster: cysteine 573 and cysteine 582. The next 2 membrane-spanning stretches (helical) occupy residues 589–610 (HVFL…HFSW) and 664–686 (LSAY…MFLF). A chlorophyll a'-binding site is contributed by histidine 675. Chlorophyll a is bound by residues methionine 683 and tyrosine 691. Tryptophan 692 lines the phylloquinone pocket. A helical membrane pass occupies residues 724–744 (AVGVAHYLLGGIATTWAFFLA).

The protein belongs to the PsaA/PsaB family. As to quaternary structure, the PsaA/B heterodimer binds the P700 chlorophyll special pair and subsequent electron acceptors. PSI consists of a core antenna complex that captures photons, and an electron transfer chain that converts photonic excitation into a charge separation. The eukaryotic PSI reaction center is composed of at least 11 subunits. P700 is a chlorophyll a/chlorophyll a' dimer, A0 is one or more chlorophyll a, A1 is one or both phylloquinones and FX is a shared 4Fe-4S iron-sulfur center. serves as cofactor.

It is found in the plastid. The protein resides in the chloroplast thylakoid membrane. It catalyses the reaction reduced [plastocyanin] + hnu + oxidized [2Fe-2S]-[ferredoxin] = oxidized [plastocyanin] + reduced [2Fe-2S]-[ferredoxin]. PsaA and PsaB bind P700, the primary electron donor of photosystem I (PSI), as well as the electron acceptors A0, A1 and FX. PSI is a plastocyanin-ferredoxin oxidoreductase, converting photonic excitation into a charge separation, which transfers an electron from the donor P700 chlorophyll pair to the spectroscopically characterized acceptors A0, A1, FX, FA and FB in turn. Oxidized P700 is reduced on the lumenal side of the thylakoid membrane by plastocyanin. This is Photosystem I P700 chlorophyll a apoprotein A1 from Psilotum nudum (Whisk fern).